A 492-amino-acid chain; its full sequence is Catalase isozyme 2 (492 aa).

Active-site residues include H65 and N138. Y348 serves as a coordination point for heme.

Belongs to the catalase family. As to quaternary structure, homotetramer. Heme is required as a cofactor.

It is found in the peroxisome. Its subcellular location is the glyoxysome. It carries out the reaction 2 H2O2 = O2 + 2 H2O. Its function is as follows. Occurs in almost all aerobically respiring organisms and serves to protect cells from the toxic effects of hydrogen peroxide. The protein is Catalase isozyme 2 (CAT2) of Solanum tuberosum (Potato).